The chain runs to 522 residues: L-tyrosine/L-DOPA decarboxylase 2 (522 aa).

Tandem repeats lie at residues 75–132 (KDVH…TELE) and 135–186 (VMDW…GREH). Residues 75–186 (KDVHDDIVPG…RILDRIGREH (112 aa)) are 2 X approximate tandem repeats. 4 residues coordinate pyridoxal 5'-phosphate: T163, C164, T258, and N312. Position 315 is an N6-(pyridoxal phosphate)lysine (K315).

It belongs to the group II decarboxylase family. Requires pyridoxal 5'-phosphate as cofactor. Strongly expressed in all tissues, particularly in thick roots.

The catalysed reaction is L-tyrosine + H(+) = tyramine + CO2. The enzyme catalyses L-dopa + H(+) = dopamine + CO2. The protein operates within aromatic compound metabolism. It participates in alkaloid biosynthesis. In terms of biological role, aromatic amino acid decarboxylase participating in the biosynthesis of natural products derived from phenylethylamine, including mescaline, a natural hallucinogen potentially used in psychotherapeutic treatments. Catalyzes the decarboxylation of L-tyrosine and L-DOPA. The sequence is that of L-tyrosine/L-DOPA decarboxylase 2 from Lophophora williamsii (Peyote).